The primary structure comprises 88 residues: Small ribosomal subunit protein bS20 (88 aa).

The interval 1 to 23 (MANSPQAKKRARQNDKARAHNAS) is disordered.

It belongs to the bacterial ribosomal protein bS20 family.

In terms of biological role, binds directly to 16S ribosomal RNA. The protein is Small ribosomal subunit protein bS20 of Saccharophagus degradans (strain 2-40 / ATCC 43961 / DSM 17024).